We begin with the raw amino-acid sequence, 391 residues long: Tryptophan synthase beta chain (391 aa).

N6-(pyridoxal phosphate)lysine is present on lysine 84.

The protein belongs to the TrpB family. As to quaternary structure, tetramer of two alpha and two beta chains. Pyridoxal 5'-phosphate is required as a cofactor.

The catalysed reaction is (1S,2R)-1-C-(indol-3-yl)glycerol 3-phosphate + L-serine = D-glyceraldehyde 3-phosphate + L-tryptophan + H2O. The protein operates within amino-acid biosynthesis; L-tryptophan biosynthesis; L-tryptophan from chorismate: step 5/5. In terms of biological role, the beta subunit is responsible for the synthesis of L-tryptophan from indole and L-serine. The sequence is that of Tryptophan synthase beta chain from Caldanaerobacter subterraneus subsp. tengcongensis (strain DSM 15242 / JCM 11007 / NBRC 100824 / MB4) (Thermoanaerobacter tengcongensis).